Consider the following 408-residue polypeptide: Argininosuccinate synthase (408 aa).

ATP is bound by residues 10–18 and A37; that span reads AYSGGLDTS. 2 residues coordinate L-citrulline: Y90 and S95. Position 120 (G120) interacts with ATP. T122, N126, and D127 together coordinate L-aspartate. N126 provides a ligand contact to L-citrulline. 5 residues coordinate L-citrulline: R130, S181, S190, E266, and Y278.

This sequence belongs to the argininosuccinate synthase family. Type 1 subfamily. As to quaternary structure, homotetramer.

The protein localises to the cytoplasm. The enzyme catalyses L-citrulline + L-aspartate + ATP = 2-(N(omega)-L-arginino)succinate + AMP + diphosphate + H(+). The protein operates within amino-acid biosynthesis; L-arginine biosynthesis; L-arginine from L-ornithine and carbamoyl phosphate: step 2/3. In Cereibacter sphaeroides (strain ATCC 17029 / ATH 2.4.9) (Rhodobacter sphaeroides), this protein is Argininosuccinate synthase.